Reading from the N-terminus, the 178-residue chain is Protein FLOWERING LOCUS T 1 (178 aa).

The protein belongs to the phosphatidylethanolamine-binding protein family. Expressed in leaves but not in shoot apex.

In terms of biological role, involved in the regulation of vernalization and of flowering time. The polypeptide is Protein FLOWERING LOCUS T 1 (Brachypodium distachyon (Purple false brome)).